A 174-amino-acid chain; its full sequence is Flavodoxin 1 (174 aa).

One can recognise a Flavodoxin-like domain in the interval isoleucine 4–glutamine 168. Residues serine 10–valine 14 and leucine 89–glycine 122 each bind FMN.

FMN is required as a cofactor.

Functionally, flavodoxins are low-potential electron donors to a number of redox enzymes. AvFld 1 is able to donate electrons to the assimilatory nitrate reductase of A.vinelandii to catalyze the reduction of nitrate to nitrite. The chain is Flavodoxin 1 from Azotobacter vinelandii (strain DJ / ATCC BAA-1303).